Here is a 299-residue protein sequence, read N- to C-terminus: Bifunctional protein FolD (299 aa).

NADP(+) is bound by residues 168-170 (GRS), Ser193, and Ile234.

The protein belongs to the tetrahydrofolate dehydrogenase/cyclohydrolase family. In terms of assembly, homodimer.

The enzyme catalyses (6R)-5,10-methylene-5,6,7,8-tetrahydrofolate + NADP(+) = (6R)-5,10-methenyltetrahydrofolate + NADPH. It carries out the reaction (6R)-5,10-methenyltetrahydrofolate + H2O = (6R)-10-formyltetrahydrofolate + H(+). It functions in the pathway one-carbon metabolism; tetrahydrofolate interconversion. Its function is as follows. Catalyzes the oxidation of 5,10-methylenetetrahydrofolate to 5,10-methenyltetrahydrofolate and then the hydrolysis of 5,10-methenyltetrahydrofolate to 10-formyltetrahydrofolate. This chain is Bifunctional protein FolD, found in Brucella abortus (strain S19).